The primary structure comprises 813 residues: Leucine--tRNA ligase (813 aa).

A 'HIGH' region motif is present at residues 42–52 (PYTSGNLHIGH). The 'KMSKS' region signature appears at 580–584 (KMSKS). Lysine 583 contributes to the ATP binding site.

It belongs to the class-I aminoacyl-tRNA synthetase family.

It is found in the cytoplasm. The enzyme catalyses tRNA(Leu) + L-leucine + ATP = L-leucyl-tRNA(Leu) + AMP + diphosphate. The sequence is that of Leucine--tRNA ligase from Dehalococcoides mccartyi (strain CBDB1).